The following is a 416-amino-acid chain: Multifunctional CCA protein (416 aa).

Residues Gly-8 and Arg-11 each coordinate ATP. 2 residues coordinate CTP: Gly-8 and Arg-11. Mg(2+) is bound by residues Asp-21 and Asp-23. The ATP site is built by Arg-91, Arg-137, and Arg-140. CTP contacts are provided by Arg-91, Arg-137, and Arg-140. Residues 228-329 form the HD domain; it reads TGVHTLMVLA…VKIFDKADFW (102 aa).

Belongs to the tRNA nucleotidyltransferase/poly(A) polymerase family. Bacterial CCA-adding enzyme type 1 subfamily. As to quaternary structure, monomer. Can also form homodimers and oligomers. Mg(2+) is required as a cofactor. The cofactor is Ni(2+).

It catalyses the reaction a tRNA precursor + 2 CTP + ATP = a tRNA with a 3' CCA end + 3 diphosphate. The enzyme catalyses a tRNA with a 3' CCA end + 2 CTP + ATP = a tRNA with a 3' CCACCA end + 3 diphosphate. Catalyzes the addition and repair of the essential 3'-terminal CCA sequence in tRNAs without using a nucleic acid template. Adds these three nucleotides in the order of C, C, and A to the tRNA nucleotide-73, using CTP and ATP as substrates and producing inorganic pyrophosphate. tRNA 3'-terminal CCA addition is required both for tRNA processing and repair. Also involved in tRNA surveillance by mediating tandem CCA addition to generate a CCACCA at the 3' terminus of unstable tRNAs. While stable tRNAs receive only 3'-terminal CCA, unstable tRNAs are marked with CCACCA and rapidly degraded. In Shewanella baltica (strain OS195), this protein is Multifunctional CCA protein.